The chain runs to 204 residues: 3-isopropylmalate dehydratase small subunit (204 aa).

It belongs to the LeuD family. LeuD type 1 subfamily. Heterodimer of LeuC and LeuD.

It carries out the reaction (2R,3S)-3-isopropylmalate = (2S)-2-isopropylmalate. Its pathway is amino-acid biosynthesis; L-leucine biosynthesis; L-leucine from 3-methyl-2-oxobutanoate: step 2/4. In terms of biological role, catalyzes the isomerization between 2-isopropylmalate and 3-isopropylmalate, via the formation of 2-isopropylmaleate. This is 3-isopropylmalate dehydratase small subunit from Vesicomyosocius okutanii subsp. Calyptogena okutanii (strain HA).